The chain runs to 967 residues: Probable disease resistance protein At1g61190 (967 aa).

The stretch at 20–68 (RCLCGKGYIRNLEKNLRALQREMEDLRATQHEVQNKVAREESRHQQRLE) forms a coiled coil. Residues 132 to 153 (GNFDEVSQPPPRSEVEERPTQP) are disordered. The NB-ARC domain occupies 138-441 (SQPPPRSEVE…CEGFIGEDQV (304 aa)). An ATP-binding site is contributed by 180 to 187 (GMGGVGKT). LRR repeat units follow at residues 516-537 (AVRRMSLMMNEIEEITCESKCS), 538-559 (ELTTLFLQSNQLKNLSGEFIRY), 562-585 (KLVVLDLSHNPDFNELPEQISGLV), 586-608 (SLQYLDLSWTRIEQLPVGLKELK), and 609-631 (KLIFLNLCFTERLCSISGISRLL).

It belongs to the disease resistance NB-LRR family.

Functionally, probable disease resistance protein. The chain is Probable disease resistance protein At1g61190 from Arabidopsis thaliana (Mouse-ear cress).